A 263-amino-acid polypeptide reads, in one-letter code: Retinoic acid early transcript 1E (263 aa).

The signal sequence occupies residues 1-30; the sequence is MRRISLTSSPVRLLLFLLLLLIALEIMVGG. The tract at residues 31–116 is MHC class I alpha-1 like; down-regulates the cell surface expression of KLRK1; the sequence is HSLCFNFTIK…DIKPQIKTSD (86 aa). Residues 31 to 225 are Extracellular-facing; the sequence is HSLCFNFTIK…IHWSSSSLPD (195 aa). 3 N-linked (GlcNAc...) asparagine glycosylation sites follow: N36, N154, and N212. The tract at residues 117–207 is MHC class I alpha-2 like; down-regulates the cell surface expression of KLRK1; the sequence is PSTLQVEMFC…GHWEAMPEPT (91 aa). An intrachain disulfide couples C126 to C189. A helical membrane pass occupies residues 226–248; the sequence is RWIILGAFILLVLMGIVLICVWW. The Cytoplasmic segment spans residues 249-263; sequence QNGEWQAGLWPLRTS.

Belongs to the MHC class I family. Binds to KLRK1/NKG2D. In terms of assembly, (Microbial infection) Contrary to other family members, does not interact with CMV glycoprotein UL16. In terms of tissue distribution, predominantly expressed in the skin, but also expressed in testis and trachea. Up-regulated in tumor cells of different origins. Expression progressively decreased after treatment of tumor cells with retinoic acid.

It is found in the membrane. The protein resides in the secreted. Binds and activates the KLRK1/NKG2D receptor, mediating natural killer cell cytotoxicity. In Homo sapiens (Human), this protein is Retinoic acid early transcript 1E.